The chain runs to 500 residues: Probable malate:quinone oxidoreductase (500 aa).

This sequence belongs to the MQO family. It depends on FAD as a cofactor.

The catalysed reaction is (S)-malate + a quinone = a quinol + oxaloacetate. It functions in the pathway carbohydrate metabolism; tricarboxylic acid cycle; oxaloacetate from (S)-malate (quinone route): step 1/1. This Corynebacterium glutamicum (strain R) protein is Probable malate:quinone oxidoreductase.